The sequence spans 256 residues: Osteocalcin 2 (256 aa).

The N-terminal stretch at 1 to 18 is a signal peptide; the sequence is MKTLVLLSICALLSVCWS. Positions 19–209 are excised as a propeptide; it reads MGAVEPEVVV…LASVLLRRRR (191 aa). Low complexity predominate over residues 38 to 186; sequence AAPADPAAAA…SSSSSSSSES (149 aa). Positions 38-193 are disordered; that stretch reads AAPADPAAAA…SESASDEAAK (156 aa). The Gla domain maps to 218–252; the sequence is PLQLESLREVCELNIACDEMAETAGIVAAYVAYYG. Glu-222, Glu-226, Glu-229, and Asp-235 together coordinate Ca(2+). A 4-carboxyglutamate mark is found at Glu-222, Glu-226, and Glu-229. Cys-228 and Cys-234 are disulfide-bonded. Glu-236 carries the 4-carboxyglutamate modification.

It belongs to the osteocalcin/matrix Gla protein family. Gamma-carboxyglutamate residues are formed by vitamin K dependent carboxylation by GGCX. These residues are essential for the binding of calcium.

The protein localises to the secreted. In terms of biological role, the carboxylated form is one of the main organic components of the bone matrix, which constitutes 1-2% of the total bone protein. The carboxylated form binds strongly to apatite and calcium. The polypeptide is Osteocalcin 2 (Diplodus sargus (White seabream)).